The chain runs to 78 residues: Small ribosomal subunit protein bS18 (78 aa).

It belongs to the bacterial ribosomal protein bS18 family. Part of the 30S ribosomal subunit. Forms a tight heterodimer with protein bS6.

Functionally, binds as a heterodimer with protein bS6 to the central domain of the 16S rRNA, where it helps stabilize the platform of the 30S subunit. The polypeptide is Small ribosomal subunit protein bS18 (Pseudothermotoga lettingae (strain ATCC BAA-301 / DSM 14385 / NBRC 107922 / TMO) (Thermotoga lettingae)).